Reading from the N-terminus, the 470-residue chain is Ribosomal protein uS12 methylthiotransferase RimO (470 aa).

The MTTase N-terminal domain occupies 33–143; the sequence is NKIGFVSLGC…VLEHVHQYAP (111 aa). Residues Cys42, Cys78, Cys107, Cys175, Cys179, and Cys182 each contribute to the [4Fe-4S] cluster site. The Radical SAM core domain maps to 161–398; it reads LTPKHYAYLK…MLVQQEISAA (238 aa). A TRAM domain is found at 401–467; that stretch reads QKRIGSTMQV…EYDLWGSILH (67 aa).

It belongs to the methylthiotransferase family. RimO subfamily. [4Fe-4S] cluster serves as cofactor.

It is found in the cytoplasm. It catalyses the reaction L-aspartate(89)-[ribosomal protein uS12]-hydrogen + (sulfur carrier)-SH + AH2 + 2 S-adenosyl-L-methionine = 3-methylsulfanyl-L-aspartate(89)-[ribosomal protein uS12]-hydrogen + (sulfur carrier)-H + 5'-deoxyadenosine + L-methionine + A + S-adenosyl-L-homocysteine + 2 H(+). Functionally, catalyzes the methylthiolation of an aspartic acid residue of ribosomal protein uS12. In Vibrio cholerae serotype O1 (strain ATCC 39315 / El Tor Inaba N16961), this protein is Ribosomal protein uS12 methylthiotransferase RimO.